The sequence spans 357 residues: UDP-N-acetylglucosamine--N-acetylmuramyl-(pentapeptide) pyrophosphoryl-undecaprenol N-acetylglucosamine transferase (357 aa).

Residues 15-17 (SGG), N125, S190, and Q290 each bind UDP-N-acetyl-alpha-D-glucosamine.

This sequence belongs to the glycosyltransferase 28 family. MurG subfamily.

Its subcellular location is the cell inner membrane. It catalyses the reaction di-trans,octa-cis-undecaprenyl diphospho-N-acetyl-alpha-D-muramoyl-L-alanyl-D-glutamyl-meso-2,6-diaminopimeloyl-D-alanyl-D-alanine + UDP-N-acetyl-alpha-D-glucosamine = di-trans,octa-cis-undecaprenyl diphospho-[N-acetyl-alpha-D-glucosaminyl-(1-&gt;4)]-N-acetyl-alpha-D-muramoyl-L-alanyl-D-glutamyl-meso-2,6-diaminopimeloyl-D-alanyl-D-alanine + UDP + H(+). It functions in the pathway cell wall biogenesis; peptidoglycan biosynthesis. In terms of biological role, cell wall formation. Catalyzes the transfer of a GlcNAc subunit on undecaprenyl-pyrophosphoryl-MurNAc-pentapeptide (lipid intermediate I) to form undecaprenyl-pyrophosphoryl-MurNAc-(pentapeptide)GlcNAc (lipid intermediate II). This Chlamydia pneumoniae (Chlamydophila pneumoniae) protein is UDP-N-acetylglucosamine--N-acetylmuramyl-(pentapeptide) pyrophosphoryl-undecaprenol N-acetylglucosamine transferase.